Consider the following 159-residue polypeptide: Probable metallophosphoesterase MPN_126 (159 aa).

The Mn(2+) site is built by aspartate 9, histidine 11, aspartate 34, asparagine 53, histidine 75, histidine 107, and histidine 109.

The protein belongs to the metallophosphoesterase superfamily. YfcE family. It depends on Mn(2+) as a cofactor.

This is Probable metallophosphoesterase MPN_126 from Mycoplasma pneumoniae (strain ATCC 29342 / M129 / Subtype 1) (Mycoplasmoides pneumoniae).